The following is a 1004-amino-acid chain: Translation initiation factor IF-2 (1004 aa).

The tract at residues 36 to 393 (SSTIEPPVVK…RQKRNEYESM (358 aa)) is disordered. Low complexity-rich tracts occupy residues 62–157 (AAKP…AKPA) and 173–183 (AAKPGAEAPRP). Pro residues-rich tracts occupy residues 184–196 (GGMP…PAPK) and 219–236 (PRPG…PGGG). 2 stretches are compositionally biased toward gly residues: residues 237 to 249 (PRPQ…GGQR) and 261 to 277 (GNRG…GPRP). Residues 279-303 (GGPRPQGGSRPQGGSAQGAQGAPSQ) show a composition bias toward low complexity. Gly residues predominate over residues 330-373 (GKGGRGGQAGGGAGGGFNRGGGTGGGAGRGGRRGGTAGAFGRPG). Over residues 377 to 386 (RRGRKSKRQK) the composition is skewed to basic residues. Residues 499-671 (KRPPVVTVMG…VCLTADAELD (173 aa)) enclose the tr-type G domain. Residues 508 to 515 (GHVDHGKT) form a G1 region. GTP is bound at residue 508–515 (GHVDHGKT). The segment at 533 to 537 (GITQG) is G2. Residues 558-561 (DTPG) are G3. GTP contacts are provided by residues 558-562 (DTPGH) and 612-615 (NKID). The segment at 612–615 (NKID) is G4. The segment at 648–650 (SAK) is G5.

Belongs to the TRAFAC class translation factor GTPase superfamily. Classic translation factor GTPase family. IF-2 subfamily.

The protein resides in the cytoplasm. One of the essential components for the initiation of protein synthesis. Protects formylmethionyl-tRNA from spontaneous hydrolysis and promotes its binding to the 30S ribosomal subunits. Also involved in the hydrolysis of GTP during the formation of the 70S ribosomal complex. The chain is Translation initiation factor IF-2 from Corynebacterium glutamicum (strain ATCC 13032 / DSM 20300 / JCM 1318 / BCRC 11384 / CCUG 27702 / LMG 3730 / NBRC 12168 / NCIMB 10025 / NRRL B-2784 / 534).